Here is a 338-residue protein sequence, read N- to C-terminus: 1-aminocyclopropane-1-carboxylate deaminase (338 aa).

Lys51 is modified (N6-(pyridoxal phosphate)lysine). Ser78 acts as the Nucleophile in catalysis.

The protein belongs to the ACC deaminase/D-cysteine desulfhydrase family. As to quaternary structure, homotrimer. The cofactor is pyridoxal 5'-phosphate.

The enzyme catalyses 1-aminocyclopropane-1-carboxylate + H2O = 2-oxobutanoate + NH4(+). Catalyzes a cyclopropane ring-opening reaction, the irreversible conversion of 1-aminocyclopropane-1-carboxylate (ACC) to ammonia and alpha-ketobutyrate. Allows growth on ACC as a nitrogen source. This chain is 1-aminocyclopropane-1-carboxylate deaminase, found in Pseudomonas syringae pv. syringae (strain B728a).